The primary structure comprises 672 residues: DNA ligase (672 aa).

Residues 32-36, 81-82, and Glu113 contribute to the NAD(+) site; these read DAEYD and SL. The N6-AMP-lysine intermediate role is filled by Lys115. 4 residues coordinate NAD(+): Arg136, Glu173, Lys290, and Lys314. Cys408, Cys411, Cys426, and Cys432 together coordinate Zn(2+). Residues 592-672 enclose the BRCT domain; it reads EIDSPFAGKT…EMIRLLGESS (81 aa).

Belongs to the NAD-dependent DNA ligase family. LigA subfamily. Requires Mg(2+) as cofactor. The cofactor is Mn(2+).

It carries out the reaction NAD(+) + (deoxyribonucleotide)n-3'-hydroxyl + 5'-phospho-(deoxyribonucleotide)m = (deoxyribonucleotide)n+m + AMP + beta-nicotinamide D-nucleotide.. Its function is as follows. DNA ligase that catalyzes the formation of phosphodiester linkages between 5'-phosphoryl and 3'-hydroxyl groups in double-stranded DNA using NAD as a coenzyme and as the energy source for the reaction. It is essential for DNA replication and repair of damaged DNA. The sequence is that of DNA ligase from Yersinia enterocolitica serotype O:8 / biotype 1B (strain NCTC 13174 / 8081).